A 206-amino-acid chain; its full sequence is Putative archaetidylserine decarboxylase proenzyme (206 aa).

The active-site Schiff-base intermediate with substrate; via pyruvic acid is serine 172. Serine 172 bears the Pyruvic acid (Ser); by autocatalysis mark.

It belongs to the phosphatidylserine decarboxylase family. PSD-A subfamily. In terms of assembly, heterodimer of a large membrane-associated beta subunit and a small pyruvoyl-containing alpha subunit. Pyruvate is required as a cofactor. In terms of processing, is synthesized initially as an inactive proenzyme. Formation of the active enzyme involves a self-maturation process in which the active site pyruvoyl group is generated from an internal serine residue via an autocatalytic post-translational modification. Two non-identical subunits are generated from the proenzyme in this reaction, and the pyruvate is formed at the N-terminus of the alpha chain, which is derived from the carboxyl end of the proenzyme. The post-translation cleavage follows an unusual pathway, termed non-hydrolytic serinolysis, in which the side chain hydroxyl group of the serine supplies its oxygen atom to form the C-terminus of the beta chain, while the remainder of the serine residue undergoes an oxidative deamination to produce ammonia and the pyruvoyl prosthetic group on the alpha chain.

It is found in the cell membrane. It catalyses the reaction archaetidylserine + H(+) = archaetidylethanolamine + CO2. Catalyzes the formation of archaetidylethanolamine (PtdEtn) from archaetidylserine (PtdSer). The polypeptide is Putative archaetidylserine decarboxylase proenzyme (Methanocaldococcus jannaschii (strain ATCC 43067 / DSM 2661 / JAL-1 / JCM 10045 / NBRC 100440) (Methanococcus jannaschii)).